We begin with the raw amino-acid sequence, 120 residues long: Large ribosomal subunit protein uL18 (120 aa).

Belongs to the universal ribosomal protein uL18 family. In terms of assembly, part of the 50S ribosomal subunit; part of the 5S rRNA/L5/L18/L25 subcomplex. Contacts the 5S and 23S rRNAs.

In terms of biological role, this is one of the proteins that bind and probably mediate the attachment of the 5S RNA into the large ribosomal subunit, where it forms part of the central protuberance. The sequence is that of Large ribosomal subunit protein uL18 from Brucella abortus (strain S19).